Consider the following 842-residue polypeptide: Synaptonemal complex protein 2-like (842 aa).

4 disordered regions span residues 451–473 (GSLE…EPEQ), 505–560 (FARD…KQRV), 619–666 (STQK…SSLE), and 715–738 (EDAP…PGSV). Composition is skewed to basic and acidic residues over residues 458–470 (TEER…KQDE) and 505–525 (FARD…HDLL). A compositionally biased stretch (basic residues) spans 543 to 559 (NHKRKSLRTYSQRKKQR). Composition is skewed to basic and acidic residues over residues 624 to 633 (GLEKPERRGS) and 643 to 655 (RVTD…EPRS).

The protein belongs to the SYCP2 family. In terms of tissue distribution, specifically expressed in oocytes.

It is found in the nucleus. It localises to the chromosome. The protein resides in the centromere. Its function is as follows. Oocyte-specific protein that localizes to centromeres at the dictyate stage and regulates the survival of primordial oocytes. The sequence is that of Synaptonemal complex protein 2-like from Mus musculus (Mouse).